The chain runs to 472 residues: MKRFILLFFLSTIAIFKVYSQRLYDNGPLTGDNNYVLQGSKWNKTTLKYYIYNSSSHLTTTERENAIRSAFALWSDKSTLSFIQVYNPNQADIKIKWEKGNHGDGYPFDGNTGILAHAFYPPPAGGNYAGHLHFDGDENWSINGSGIDLITVAAHEIGHLLGIEHSNVSSALMYPYYTGIKRQLDNDDCLAVWDLYGYPFSISGPSSVCDQATYTVENLLSGATVQWSVSNPNIATINSSNGVLTCRGNGICEVRATINNSSVALTPLKICLGTPISQDITLTVESLNSNGTLCTDNPNAIMADHPGGNHLGYIREYEWRISNGWQIAHHPGDNGIYADHFIVTVIPLSPLPGSPTVSVRARSECGWGTWKEVQIPAVSCSRTISPFTLSPNPATDEVILQLMETDEVSGLSVLSTDRSAYEIQIWSGMRMLRSFRTNEPTFQISMTGLPAGLYFVRVVKNGQTYTQKLIKK.

An N-terminal signal peptide occupies residues 1 to 20 (MKRFILLFFLSTIAIFKVYS). The propeptide at 21–34 (QRLYDNGPLTGDNN) is activation peptide. H102, D104, H117, H133, and H155 together coordinate Zn(2+). E156 serves as the catalytic Proton donor/acceptor. Residues H159 and H165 each contribute to the Zn(2+) site. Positions 196-386 (YGYPFSISGP…AVSCSRTISP (191 aa)) are cleaved as a propeptide — removed in short form. Residues 387–472 (FTLSPNPATD…QTYTQKLIKK (86 aa)) constitute a propeptide, removed in long form.

This sequence belongs to the peptidase M10A family. The cofactor is Zn(2+). In terms of processing, processes itself into the mature 18-kDa enzyme (Kly18) through sequential autoproteolytic cleavage at both the N- and C-termini. However, the maturation intermediate Kly38 is found to be more active than Kly18 and the rate for its processing is slow, which raises the question as to whether Kly38 is a physiologically relevant entity.

The protein resides in the secreted. With respect to regulation, autoprocessing and proteolytic activity are completely inhibited by EDTA and 1,10-phenanthroline in vitro. Proteolytic activity is 3-fold enhanced by Ca(2+) due to stabilization of the protein structure but inhibited by an excess of Zn(2+). Inhibitory studies of karilysin identified several phage display-selected peptides with apparent inhibition constants (Ki) in the micromolar range, among which is the tetrapeptide SWFP (Ki=10.7 uM). In terms of biological role, metalloprotease able to cleave casein, gelatin, elastin, fibrinogen and fibronectin. Shows exclusive preference for hydrophobic residues, especially Leu, Tyr and Met, at the P1' position of substrates, and for Pro or Ala at P3. Can efficiently cleave the antimicrobial peptide LL-37 which is a component of the immune system, leading to a significant reduction of its bactericidal activity. Is also able to inhibit all pathways of the human complement system. The classical and lectin complement pathways are inhibited because of the efficient degradation of mannose-binding lectin, ficolin-2, ficolin-3, and C4 by karilysin, whereas inhibition of the terminal pathway is caused by cleavage of C5. Thus, karilysin appears to be a major virulence factor of T.forsythia that contributes to evasion of the human immune response and periodontal disease. Seems to act synergistically with gingipains from the periodontal pathogen P.gingivalis present at the same sites of infection. The polypeptide is Karilysin (kly) (Tannerella forsythia (strain ATCC 43037 / JCM 10827 / CCUG 21028 A / KCTC 5666 / FDC 338) (Bacteroides forsythus)).